A 360-amino-acid polypeptide reads, in one-letter code: mRNA cap guanine-N(7) methyltransferase (360 aa).

The disordered stretch occupies residues 1–62; that stretch reads MSSSNSRVHE…NRHENNGNAQ (62 aa). The span at 7–19 shows a compositional bias: basic and acidic residues; the sequence is RVHEEQPPTENRR. An mRNA cap 0 methyltransferase domain is found at 83-358; sequence SPIIQLKRFN…FYLAFAFEKR (276 aa). Residue 92 to 93 participates in mRNA binding; sequence NN. Residues Lys-96, Gly-118, Asp-140, Asp-168, Gln-191, and Tyr-196 each contribute to the S-adenosyl-L-methionine site.

It belongs to the class I-like SAM-binding methyltransferase superfamily. mRNA cap 0 methyltransferase family. Interacts with cdk9.

The protein localises to the nucleus. The catalysed reaction is a 5'-end (5'-triphosphoguanosine)-ribonucleoside in mRNA + S-adenosyl-L-methionine = a 5'-end (N(7)-methyl 5'-triphosphoguanosine)-ribonucleoside in mRNA + S-adenosyl-L-homocysteine. In terms of biological role, responsible for methylating the 5'-cap structure of mRNAs. In Schizosaccharomyces pombe (strain 972 / ATCC 24843) (Fission yeast), this protein is mRNA cap guanine-N(7) methyltransferase (pcm1).